A 754-amino-acid chain; its full sequence is Endothelin-converting enzyme 1 (754 aa).

The Cytoplasmic segment spans residues Met-1 to Arg-52. A Phosphothreonine modification is found at Thr-9. The helical; Signal-anchor for type II membrane protein transmembrane segment at Leu-53 to Ile-73 threads the bilayer. At Gln-74–Trp-754 the chain is on the extracellular side. In terms of domain architecture, Peptidase M13 spans Val-82–Trp-754. Intrachain disulfides connect Cys-83/Cys-88, Cys-106/Cys-739, Cys-114/Cys-699, Cys-169/Cys-419, and Cys-628/Cys-751. Asn-150, Asn-171, Asn-194, Asn-254, Asn-300, Asn-346, Asn-367, and Asn-523 each carry an N-linked (GlcNAc...) asparagine glycan. His-591 is a Zn(2+) binding site. Glu-592 is an active-site residue. Residue His-595 coordinates Zn(2+). N-linked (GlcNAc...) asparagine glycosylation is found at Asn-616 and Asn-635. Glu-651 is a Zn(2+) binding site. The active-site Proton donor is the Asp-655.

It belongs to the peptidase M13 family. Homodimer; disulfide-linked. Interacts with PPP1R16B. Interacts with TSPAN8; this interaction recruits the endothelin converting enzyme ECE1 to tetraspanin-enriched microdomains and positively modulates its enzymatic activity. Requires Zn(2+) as cofactor.

It is found in the cell membrane. It carries out the reaction Hydrolysis of the 21-Trp-|-Val-22 bond in big endothelin to form endothelin 1.. Its activity is regulated as follows. Inhibited by phosphoramidon. Converts big endothelin-1 to endothelin-1. The chain is Endothelin-converting enzyme 1 (ECE1) from Bos taurus (Bovine).